Consider the following 968-residue polypeptide: Pumilio homolog 1 (968 aa).

2 disordered regions span residues methionine 1–lysine 25 and asparagine 138–serine 171. A Phosphoserine modification is found at serine 194. Disordered regions lie at residues glycine 204–isoleucine 240, glycine 260–glycine 303, and lysine 360–serine 382. Polar residues-rich tracts occupy residues glutamine 211–asparagine 220 and aspartate 227–glutamine 238. Threonine 261 is modified (phosphothreonine). Residues threonine 291–glycine 303 show a composition bias toward polar residues. Positions phenylalanine 610 to valine 950 constitute a PUM-HD domain. 8 Pumilio repeats span residues glutamate 630–glutamate 665, glutamate 666–glutamate 701, lysine 702–lysine 737, glutamate 738–serine 773, threonine 774–glutamate 810, glutamate 811–lysine 846, glutamate 847–asparagine 882, and glutamate 883–threonine 924.

It localises to the cytoplasm. In terms of biological role, sequence-specific RNA-binding protein that regulates translation and mRNA stability by binding the 3'-UTR of target mRNAs. Binds the APUM-binding elements (APBEs) in the 3'-UTR mRNA sequence of CLV1, PNH, WUS and FAS2. This is Pumilio homolog 1 (APUM1) from Arabidopsis thaliana (Mouse-ear cress).